The sequence spans 1802 residues: Transposon Ty4-H Gag-Pol polyprotein (1802 aa).

Residues 39 to 115 (RKVSIKDEQV…IQLLETNENN (77 aa)) adopt a coiled-coil conformation. The tract at residues 381–501 (NNNLSPVQNE…KTKMVLSRKY (121 aa)) is ty4 protease. Residue aspartate 414 is the For protease activity; shared with dimeric partner of the active site. The tract at residues 539–599 (AIKPTSSPGF…EPNEFWCQTC (61 aa)) is integrase-type zinc finger-like. An Integrase catalytic domain is found at 619 to 786 (TDHEPGSSWC…LPLKAISRQP (168 aa)). Aspartate 630 and aspartate 695 together coordinate Mg(2+). Positions 1223–1248 (KRKRKRHDKNNSLTSYELERDKKRSK) are disordered. The Reverse transcriptase Ty1/copia-type domain maps to 1375–1510 (RNMFMKTLDI…DILGMDLVYN (136 aa)). Mg(2+) is bound by residues aspartate 1383, aspartate 1462, aspartate 1463, aspartate 1644, glutamate 1686, and aspartate 1720. The 147-residue stretch at 1644 to 1790 (DASVGSEYDA…KRFIQVLKNK (147 aa)) folds into the RNase H Ty1/copia-type domain.

In terms of assembly, the protease is a homodimer, whose active site consists of two apposed aspartic acid residues. Proteolytically processed into capsid protein (CA), Ty4 protease (PR), integrase (IN) and reverse transcriptase/ribonuclease H (RT) proteins. Initially, virus-like particles (VLPs) are composed of the structural unprocessed proteins Gag and Gag-Pol, and also contain the host initiator methionine tRNA (tRNA(i)-Met) which serves as a primer for minus-strand DNA synthesis, and a dimer of genomic Ty RNA. Processing of the polyproteins occurs within the particle and proceeds by an ordered pathway, called maturation. First, the protease (PR) is released by autocatalytic cleavage of the Gag-Pol polyprotein, and this cleavage is a prerequisite for subsequent processing at the remaining sites to release the mature structural and catalytic proteins. Maturation takes place prior to the RT reaction and is required to produce transposition-competent VLPs.

It is found in the cytoplasm. Its subcellular location is the nucleus. The catalysed reaction is DNA(n) + a 2'-deoxyribonucleoside 5'-triphosphate = DNA(n+1) + diphosphate. The enzyme catalyses Endonucleolytic cleavage to 5'-phosphomonoester.. Functionally, capsid protein (CA) is the structural component of the virus-like particle (VLP), forming the shell that encapsulates the retrotransposons dimeric RNA genome. The aspartyl protease (PR) mediates the proteolytic cleavages of the Gag and Gag-Pol polyproteins after assembly of the VLP. Its function is as follows. Reverse transcriptase/ribonuclease H (RT) is a multifunctional enzyme that catalyzes the conversion of the retro-elements RNA genome into dsDNA within the VLP. The enzyme displays a DNA polymerase activity that can copy either DNA or RNA templates, and a ribonuclease H (RNase H) activity that cleaves the RNA strand of RNA-DNA heteroduplexes during plus-strand synthesis and hydrolyzes RNA primers. The conversion leads to a linear dsDNA copy of the retrotransposon that includes long terminal repeats (LTRs) at both ends. In terms of biological role, integrase (IN) targets the VLP to the nucleus, where a subparticle preintegration complex (PIC) containing at least integrase and the newly synthesized dsDNA copy of the retrotransposon must transit the nuclear membrane. Once in the nucleus, integrase performs the integration of the dsDNA into the host genome. In Saccharomyces cerevisiae (strain ATCC 204508 / S288c) (Baker's yeast), this protein is Transposon Ty4-H Gag-Pol polyprotein (TY4B-H).